The sequence spans 513 residues: Bifunctional purine biosynthesis protein PurH (513 aa).

In terms of domain architecture, MGS-like spans 1 to 146 (MPRFALLSVS…KNHAHLTILT (146 aa)).

This sequence belongs to the PurH family.

It catalyses the reaction (6R)-10-formyltetrahydrofolate + 5-amino-1-(5-phospho-beta-D-ribosyl)imidazole-4-carboxamide = 5-formamido-1-(5-phospho-D-ribosyl)imidazole-4-carboxamide + (6S)-5,6,7,8-tetrahydrofolate. The catalysed reaction is IMP + H2O = 5-formamido-1-(5-phospho-D-ribosyl)imidazole-4-carboxamide. The protein operates within purine metabolism; IMP biosynthesis via de novo pathway; 5-formamido-1-(5-phospho-D-ribosyl)imidazole-4-carboxamide from 5-amino-1-(5-phospho-D-ribosyl)imidazole-4-carboxamide (10-formyl THF route): step 1/1. It functions in the pathway purine metabolism; IMP biosynthesis via de novo pathway; IMP from 5-formamido-1-(5-phospho-D-ribosyl)imidazole-4-carboxamide: step 1/1. The polypeptide is Bifunctional purine biosynthesis protein PurH (Synechococcus elongatus (strain ATCC 33912 / PCC 7942 / FACHB-805) (Anacystis nidulans R2)).